The following is a 543-amino-acid chain: Probable malate:quinone oxidoreductase (543 aa).

Belongs to the MQO family. Requires FAD as cofactor.

It catalyses the reaction (S)-malate + a quinone = a quinol + oxaloacetate. Its pathway is carbohydrate metabolism; tricarboxylic acid cycle; oxaloacetate from (S)-malate (quinone route): step 1/1. The sequence is that of Probable malate:quinone oxidoreductase from Acinetobacter baylyi (strain ATCC 33305 / BD413 / ADP1).